Reading from the N-terminus, the 302-residue chain is m7GpppN-mRNA hydrolase NUDT17 (302 aa).

The Nudix hydrolase domain maps to 89 to 237 (GRGVDLGVAV…DGTETPKHLP (149 aa)). Positions 128–149 (GHVEPDEELLDGGLRELWEESG) match the Nudix box motif. Mg(2+) is bound by residues E143 and E147.

Belongs to the Nudix hydrolase family. Mg(2+) serves as cofactor. Requires Mn(2+) as cofactor.

It carries out the reaction a 5'-end (N(7)-methyl 5'-triphosphoguanosine)-ribonucleoside in mRNA + H2O = N(7)-methyl-GDP + a 5'-end phospho-ribonucleoside in mRNA + 2 H(+). Acts as a decapping enzyme capable of hydrolyzing monomethylated capped RNAs (in vitro). Hydrolyzes monomethylated capped RNA after alpha and beta phosphates to form N(7)-methyl-GDP. Shows low activity towards unmethylated capped RNA. The sequence is that of m7GpppN-mRNA hydrolase NUDT17 (NUDT17) from Bos taurus (Bovine).